Here is a 339-residue protein sequence, read N- to C-terminus: Methylthioribose-1-phosphate isomerase (339 aa).

Substrate contacts are provided by residues 52-54 (RGA), R89, and Q188. D229 functions as the Proton donor in the catalytic mechanism. A substrate-binding site is contributed by 239-240 (NK).

It belongs to the eIF-2B alpha/beta/delta subunits family. MtnA subfamily.

The catalysed reaction is 5-(methylsulfanyl)-alpha-D-ribose 1-phosphate = 5-(methylsulfanyl)-D-ribulose 1-phosphate. It participates in amino-acid biosynthesis; L-methionine biosynthesis via salvage pathway; L-methionine from S-methyl-5-thio-alpha-D-ribose 1-phosphate: step 1/6. Catalyzes the interconversion of methylthioribose-1-phosphate (MTR-1-P) into methylthioribulose-1-phosphate (MTRu-1-P). The polypeptide is Methylthioribose-1-phosphate isomerase (Anaeromyxobacter dehalogenans (strain 2CP-C)).